The chain runs to 500 residues: Cytochrome P450 11B2, mitochondrial (500 aa).

The N-terminal 24 residues, 1–24, are a transit peptide targeting the mitochondrion; the sequence is MALRVTADVWLARPWQCLHRTRAL. Phe381 serves as a coordination point for 21-hydroxyprogesterone. Heme is bound at residue Cys447.

It belongs to the cytochrome P450 family. Heme is required as a cofactor.

The protein resides in the mitochondrion inner membrane. It carries out the reaction a steroid + 2 reduced [adrenodoxin] + O2 + 2 H(+) = an 11beta-hydroxysteroid + 2 oxidized [adrenodoxin] + H2O. The enzyme catalyses 21-hydroxyprogesterone + 2 reduced [adrenodoxin] + O2 + 2 H(+) = corticosterone + 2 oxidized [adrenodoxin] + H2O. The catalysed reaction is corticosterone + 2 reduced [adrenodoxin] + O2 + 2 H(+) = 18-hydroxycorticosterone + 2 oxidized [adrenodoxin] + H2O. It catalyses the reaction 18-hydroxycorticosterone + 2 reduced [adrenodoxin] + O2 + 2 H(+) = aldosterone + 2 oxidized [adrenodoxin] + 2 H2O. It carries out the reaction 11-deoxycortisol + 2 reduced [adrenodoxin] + O2 + 2 H(+) = cortisol + 2 oxidized [adrenodoxin] + H2O. The enzyme catalyses 21-hydroxyprogesterone + 2 reduced [adrenodoxin] + O2 + 2 H(+) = 18-hydroxy-11-deoxycorticosterone + 2 oxidized [adrenodoxin] + H2O. The catalysed reaction is cortisol + 2 reduced [adrenodoxin] + O2 + 2 H(+) = 18-hydroxycortisol + 2 oxidized [adrenodoxin] + H2O. It catalyses the reaction 18-hydroxycortisol + 2 reduced [adrenodoxin] + O2 + 2 H(+) = 18-oxocortisol + 2 oxidized [adrenodoxin] + 2 H2O. The protein operates within steroid biosynthesis. Functionally, a cytochrome P450 monooxygenase that catalyzes the biosynthesis of aldosterone, the main mineralocorticoid in the human body responsible for salt and water homeostasis, thus involved in blood pressure regulation, arterial hypertension, and the development of heart failure. Catalyzes three sequential oxidative reactions of 11-deoxycorticosterone (21-hydroxyprogesterone), namely 11-beta hydroxylation, followed by two successive oxidations at C18 yielding 18-hydroxy and then 18-oxo intermediates (that would not leave the enzyme active site during the consecutive hydroxylation reactions), ending with the formation of aldosterone. Can also produce 18-hydroxycortisol and 18-oxocortisol, derived from successive oxidations of cortisol at C18, normally found at very low levels, but significantly increased in primary aldosteronism, the most common form of secondary hypertension. Mechanistically, uses molecular oxygen inserting one oxygen atom into a substrate and reducing the second into a water molecule. Two electrons are provided by NADPH via a two-protein mitochondrial transfer system comprising flavoprotein FDXR (adrenodoxin/ferredoxin reductase) and nonheme iron-sulfur protein FDX1 or FDX2 (adrenodoxin/ferredoxin). Could also be involved in the androgen metabolic pathway. This is Cytochrome P450 11B2, mitochondrial (Cyp11b2) from Mus musculus (Mouse).